We begin with the raw amino-acid sequence, 478 residues long: Lipoprotein lipase (478 aa).

The N-terminal stretch at 1-27 is a signal peptide; it reads MESKALLLVALSVWLQSLIVSREGLAT. The interval 35 to 56 is interaction with GPIHBP1; sequence RDFTDIESKFALRTPEDTVEDT. Cys-57 and Cys-70 form a disulfide bridge. N-linked (GlcNAc...) asparagine glycosylation is present at Asn-73. At Tyr-124 the chain carries 3'-nitrotyrosine. Ser-162 functions as the Nucleophile in the catalytic mechanism. The active-site Charge relay system is the Asp-186. Position 194 is a 3'-nitrotyrosine (Tyr-194). Ala-197, Arg-200, Ser-202, and Asp-205 together coordinate Ca(2+). Residues Cys-246 and Cys-269 are joined by a disulfide bond. Positions 246–269 are essential for determining substrate specificity; it reads CNIGEAIRVIAERGLGDVDQLVKC. The active-site Charge relay system is His-271. Intrachain disulfides connect Cys-294–Cys-313 and Cys-305–Cys-308. In terms of domain architecture, PLAT spans 344–467; sequence FHYQVKMRFS…KGKSSVVFVK (124 aa). Tyr-346 carries the post-translational modification 3'-nitrotyrosine. Asn-389 carries an N-linked (GlcNAc...) asparagine glycan. The interval 420 to 424 is important for interaction with lipoprotein particles; sequence WSNWW. The interval 433 to 437 is important for heparin binding; that stretch reads KIRVK. The interval 446–470 is interaction with GPIHBP1; the sequence is IFCSREKKSHLQKGKSSVVFVKCHD. A disulfide bridge links Cys-448 with Cys-468.

Belongs to the AB hydrolase superfamily. Lipase family. In terms of assembly, homodimer. Interacts with GPIHBP1 with 1:1 stoichiometry. Interacts with APOC2; the interaction activates LPL activity in the presence of lipids. Interaction with heparan sulfate proteoglycans is required to protect LPL against loss of activity. Associates with lipoprotein particles in blood plasma. Interacts with LMF1 and SEL1L; interaction with SEL1L is required to prevent aggregation of newly synthesized LPL in the endoplasmic reticulum (ER), and for normal export of LPL from the ER to the extracellular space. Interacts with SORL1; SORL1 acts as a sorting receptor, promoting LPL localization to endosomes and later to lysosomes, leading to degradation of newly synthesized LPL. Post-translationally, tyrosine nitration after lipopolysaccharide (LPS) challenge down-regulates the lipase activity.

Its subcellular location is the cell membrane. It localises to the secreted. It is found in the extracellular space. The protein resides in the extracellular matrix. The catalysed reaction is a triacylglycerol + H2O = a diacylglycerol + a fatty acid + H(+). It catalyses the reaction a 1,2-diacyl-sn-glycero-3-phosphocholine + H2O = a 2-acyl-sn-glycero-3-phosphocholine + a fatty acid + H(+). It carries out the reaction 1,2,3-tri-(9Z-octadecenoyl)-glycerol + H2O = di-(9Z)-octadecenoylglycerol + (9Z)-octadecenoate + H(+). The enzyme catalyses 1,2-di-(9Z-octadecenoyl)-sn-glycero-3-phosphocholine + H2O = (9Z-octadecenoyl)-sn-glycero-3-phosphocholine + (9Z)-octadecenoate + H(+). The catalysed reaction is 1,2,3-tributanoylglycerol + H2O = dibutanoylglycerol + butanoate + H(+). It catalyses the reaction 1,2-dihexadecanoyl-sn-glycero-3-phosphocholine + H2O = hexadecanoyl-sn-glycero-3-phosphocholine + hexadecanoate + H(+). With respect to regulation, the apolipoprotein APOC2 acts as a coactivator of LPL activity. Ca(2+) binding promotes protein stability and formation of the active homodimer. Interaction with GPIHBP1 protects LPL against inactivation by ANGPTL4. In terms of biological role, key enzyme in triglyceride metabolism. Catalyzes the hydrolysis of triglycerides from circulating chylomicrons and very low density lipoproteins (VLDL), and thereby plays an important role in lipid clearance from the blood stream, lipid utilization and storage. Although it has both phospholipase and triglyceride lipase activities it is primarily a triglyceride lipase with low but detectable phospholipase activity. Mediates margination of triglyceride-rich lipoprotein particles in capillaries. Recruited to its site of action on the luminal surface of vascular endothelium by binding to GPIHBP1 and cell surface heparan sulfate proteoglycans. The chain is Lipoprotein lipase (LPL) from Sus scrofa (Pig).